The sequence spans 255 residues: Small ribosomal subunit protein uS3c (255 aa).

Positions 51-124 (IRESSNTSYG…NKNQNKNTGQ (74 aa)) constitute a KH type-2 domain. Positions 96–121 (EKNRDKNKSNKNSALDQSVNKNQNKN) are disordered. The span at 108-121 (SALDQSVNKNQNKN) shows a compositional bias: polar residues.

The protein belongs to the universal ribosomal protein uS3 family. In terms of assembly, part of the 30S ribosomal subunit.

The protein resides in the plastid. Its subcellular location is the chloroplast. This is Small ribosomal subunit protein uS3c (rps3) from Chaetosphaeridium globosum (Charophycean green alga).